Consider the following 411-residue polypeptide: S-adenosylmethionine synthase (411 aa).

An ATP-binding site is contributed by His-15. Asp-17 is a Mg(2+) binding site. Glu-43 contacts K(+). L-methionine is bound by residues Glu-56 and Gln-99. Residues 99–109 (QSPDIAQGVDT) form a flexible loop region. ATP-binding positions include 174 to 176 (DGK), 247 to 248 (RF), Asp-256, 262 to 263 (RK), Ala-279, and Lys-283. Asp-256 is a binding site for L-methionine. L-methionine is bound at residue Lys-287.

It belongs to the AdoMet synthase family. Homotetramer; dimer of dimers. Mg(2+) serves as cofactor. K(+) is required as a cofactor.

Its subcellular location is the cytoplasm. The catalysed reaction is L-methionine + ATP + H2O = S-adenosyl-L-methionine + phosphate + diphosphate. It functions in the pathway amino-acid biosynthesis; S-adenosyl-L-methionine biosynthesis; S-adenosyl-L-methionine from L-methionine: step 1/1. Its function is as follows. Catalyzes the formation of S-adenosylmethionine (AdoMet) from methionine and ATP. The overall synthetic reaction is composed of two sequential steps, AdoMet formation and the subsequent tripolyphosphate hydrolysis which occurs prior to release of AdoMet from the enzyme. The polypeptide is S-adenosylmethionine synthase (Streptomyces spectabilis).